A 416-amino-acid chain; its full sequence is Adipocyte plasma membrane-associated protein (416 aa).

The Cytoplasmic portion of the chain corresponds to 1-39 (MNEPEGLRFRRLNRPQIITDELQEPQYKGTSTYSGKVFR). The chain crosses the membrane as a helical span at residues 40 to 60 (VILVTLGGCLILPLLVVFFLL). At 61-412 (ESPIHPELLS…FRSPYLCKLD (352 aa)) the chain is on the extracellular side. Asparagine 160 carries N-linked (GlcNAc...) asparagine glycosylation.

It belongs to the strictosidine synthase family.

Its subcellular location is the membrane. The sequence is that of Adipocyte plasma membrane-associated protein (apmap) from Salmo salar (Atlantic salmon).